Reading from the N-terminus, the 312-residue chain is MLTFQQIILKLQSYWADQGCALLQPYDMEVGAGTSHTATFLRALGPEPWKAAYVQPSRRPKDGRYGDNPNRLQHYYQFQVVLKPAPDNILELYLGSLEALGFDLKKNDIRFVEDDWENPTLGAWGLGWEVWLNGMEVTQFTYFQQVGGIDCKPATGEITYGLERLAMYLQGVDNVYNLTWTDGLSYGDVYHQNEVEQSTYNFEHSDADFLFTAFGAYEKQANHLIGEQLALPAYEQVLKAAHTFNLLDARGAISVTERAAYIGRIRNLARAVAKAYMDSRARLGFPMAPKAHADEVLAELAKAAEQQGKKAA.

This sequence belongs to the class-II aminoacyl-tRNA synthetase family. As to quaternary structure, tetramer of two alpha and two beta subunits.

Its subcellular location is the cytoplasm. The enzyme catalyses tRNA(Gly) + glycine + ATP = glycyl-tRNA(Gly) + AMP + diphosphate. In Delftia acidovorans (strain DSM 14801 / SPH-1), this protein is Glycine--tRNA ligase alpha subunit.